The primary structure comprises 339 residues: MRVYYDSDADVNLIKAKKVAVVGYGSQGHAHALNLKESGVKELVVALRKGSAAVAKAEAAGLRVMTPEEAAAWADVVMILTPDEGQGDLYRDSLAANLKPGAAIAFAHGLNIHFNLIEPRADIDVFMIAPKGPGHTVRSEYQRGGGVPCLVAVAQNPSGNALDIALSYASAIGGGRAGIIETTFKEECETDLFGEQTVLCGGLVELIKAGFETLVEAGYAPEMAYFECLHEVKLIVDLIYEGGIANMNYSISNTAEYGEYVTGPRMITPETKAEMKRVLDDIQKGRFTRDWMLENKVNQTNFKAMRRANAAHPIEEVGEKLRAMMPWIKKGALVDKTRN.

In terms of domain architecture, KARI N-terminal Rossmann spans 1–182 (MRVYYDSDAD…GGGRAGIIET (182 aa)). NADP(+) is bound by residues 24–27 (YGSQ), R48, S51, and 83–86 (DEGQ). H108 is a catalytic residue. G134 is a binding site for NADP(+). The 146-residue stretch at 183–328 (TFKEECETDL…EKLRAMMPWI (146 aa)) folds into the KARI C-terminal knotted domain. 4 residues coordinate Mg(2+): D191, E195, E227, and E231. Position 252 (S252) interacts with substrate.

This sequence belongs to the ketol-acid reductoisomerase family. Requires Mg(2+) as cofactor.

It catalyses the reaction (2R)-2,3-dihydroxy-3-methylbutanoate + NADP(+) = (2S)-2-acetolactate + NADPH + H(+). The enzyme catalyses (2R,3R)-2,3-dihydroxy-3-methylpentanoate + NADP(+) = (S)-2-ethyl-2-hydroxy-3-oxobutanoate + NADPH + H(+). It functions in the pathway amino-acid biosynthesis; L-isoleucine biosynthesis; L-isoleucine from 2-oxobutanoate: step 2/4. The protein operates within amino-acid biosynthesis; L-valine biosynthesis; L-valine from pyruvate: step 2/4. Its function is as follows. Involved in the biosynthesis of branched-chain amino acids (BCAA). Catalyzes an alkyl-migration followed by a ketol-acid reduction of (S)-2-acetolactate (S2AL) to yield (R)-2,3-dihydroxy-isovalerate. In the isomerase reaction, S2AL is rearranged via a Mg-dependent methyl migration to produce 3-hydroxy-3-methyl-2-ketobutyrate (HMKB). In the reductase reaction, this 2-ketoacid undergoes a metal-dependent reduction by NADPH to yield (R)-2,3-dihydroxy-isovalerate. The protein is Ketol-acid reductoisomerase (NADP(+)) of Acidiphilium cryptum (strain JF-5).